A 186-amino-acid chain; its full sequence is Pterocarpan synthase 1 (186 aa).

A signal peptide spans 1-21 (MAKSTFFVCLNLSLLFSLVTA). N125 is a glycosylation site (N-linked (GlcNAc...) asparagine).

The protein belongs to the plant dirigent protein family. As to quaternary structure, homodimer.

It is found in the secreted. The protein resides in the extracellular space. Its subcellular location is the apoplast. It catalyses the reaction a (4R)-4,2'-dihydroxyisoflavan = a pterocarpan + H2O.. The catalysed reaction is (3R,4R)-7,2'-dihydroxy-4'-methoxyisoflavanol = (-)-medicarpin + H2O. It carries out the reaction (3R,4R)-3-(6-hydroxy-1,3-benzodioxol-5-yl)-3,4-dihydro-2H-chromene-4,7-diol = (-)-maackiain + H2O. The enzyme catalyses (3S,4R)-7,2'-dihydroxy-4'-methoxyisoflavanol = (+)-medicarpin + H2O. It catalyses the reaction (3R,4R)-7,2',4'-trihydroxyisoflavanol = (6aR,11aR)-3,9-dihydroxypterocarpan + H2O. Its function is as follows. Involved in pterocarpan phytoalexin biosynthesis. Catalyzes the last step in the biosynthesis of the phytoalexin medicarpin, and thereby contributes to plant defense reactions. Dirigent proteins impart stereoselectivity on the phenoxy radical-coupling reaction, yielding optically active lignans from two molecules of coniferyl alcohol in the biosynthesis of lignans, flavonolignans, and alkaloids and thus plays a central role in plant secondary metabolism. The protein is Pterocarpan synthase 1 of Glycine max (Soybean).